A 468-amino-acid chain; its full sequence is Transmembrane protein 151A (468 aa).

The tract at residues 1–20 (MPEGEGGDCGEVPALVPDGE) is disordered. The next 2 helical transmembrane spans lie at 45–65 (CLLL…CRLA) and 98–118 (YLYI…AECW). Residues 384–438 (VSSNSLPPARPSGPRLPFSRSRLSLGAGGRTTPGVFRSLSGGPLGRRGEDTEPLE) are disordered.

This sequence belongs to the TMEM151 family. In terms of tissue distribution, highly expressed in the central nervous system (CNS) including the cerebral cortex, hippocampus, spinal cord, brainstem, and thalamus. Expression is relatively low during postnatal stages but highly expressed at postnatal day 14 (P14), and declined in adulthood. Also expressed in the stomach, heart, liver, spleen, lung, kidney, and muscle.

The protein localises to the endoplasmic reticulum membrane. Its subcellular location is the cell projection. The protein resides in the axon. It localises to the dendrite. The polypeptide is Transmembrane protein 151A (Tmem151a) (Mus musculus (Mouse)).